A 201-amino-acid chain; its full sequence is Recombination protein RecR (201 aa).

The C4-type zinc-finger motif lies at 58 to 73; sequence CEQCASITDTCPCRIC. In terms of domain architecture, Toprim spans 81–178; it reads DKLCLVSEWD…ELSRLAQGIP (98 aa).

It belongs to the RecR family.

In terms of biological role, may play a role in DNA repair. It seems to be involved in an RecBC-independent recombinational process of DNA repair. It may act with RecF and RecO. The sequence is that of Recombination protein RecR from Maridesulfovibrio salexigens (strain ATCC 14822 / DSM 2638 / NCIMB 8403 / VKM B-1763) (Desulfovibrio salexigens).